Here is a 388-residue protein sequence, read N- to C-terminus: MKVLTAIALSAIAFTGAVAAVITQEAFLNNPRIHHDQEKYLIELAPYRTRWVTEEEKWALKLDGVNFIDITEEHNTGFYPTLHSASYVKYPPKMQYAEEVAALNKNLSKENMKANLERFTSFHTRYYKSQTGIRSATWLFDQVQRVVSESGAAEYGATVERFSHPWGQFSIIARIPGRTNKTVVLGAHQDSINLFLPSILAAPGADDDGSGTVTILEALRGLLQSDAIAKGNASNTVEFHWYSAEEGGMLGSQAIFSNYKRNRREIKAMLQQDMTGYVQGALNAGVEEAIGIMVDYVDQGLTQFLKDVVTAYCSVGYLETKCGYACSDHTSASKYGYPAAMATEAEMENTNKKIHTTDDKIKYLSFDHMLEHAKLSLGFAFELAFAPF.

Positions 1-19 (MKVLTAIALSAIAFTGAVA) are cleaved as a signal peptide. Residues 20–88 (AVITQEAFLN…YPTLHSASYV (69 aa)) constitute a propeptide that is removed on maturation. Residues Asn106 and Asn180 are each glycosylated (N-linked (GlcNAc...) asparagine). Zn(2+) contacts are provided by His188 and Asp207. A glycan (N-linked (GlcNAc...) asparagine) is linked at Asn232. The Zn(2+) site is built by Glu246 and Asp273. Cys322 and Cys326 form a disulfide bridge. His355 serves as a coordination point for Zn(2+).

It belongs to the peptidase M28 family. M28E subfamily. As to quaternary structure, monomer. The cofactor is Zn(2+).

It is found in the secreted. Extracellular aminopeptidase that allows assimilation of proteinaceous substrates and which contributes to pathogenicity. This chain is Leucine aminopeptidase 1 (lap1), found in Aspergillus fumigatus (strain CBS 144.89 / FGSC A1163 / CEA10) (Neosartorya fumigata).